The following is a 385-amino-acid chain: Acetylornithine deacetylase (385 aa).

His-80 serves as a coordination point for Zn(2+). Residue Asp-82 is part of the active site. Asp-112 is a Zn(2+) binding site. Glu-144 (proton acceptor) is an active-site residue. Residues Glu-145, Glu-169, and His-355 each coordinate Zn(2+).

Belongs to the peptidase M20A family. ArgE subfamily. Homodimer. The cofactor is Zn(2+). Requires Co(2+) as cofactor. Glutathione serves as cofactor.

The protein localises to the cytoplasm. The enzyme catalyses N(2)-acetyl-L-ornithine + H2O = L-ornithine + acetate. The protein operates within amino-acid biosynthesis; L-arginine biosynthesis; L-ornithine from N(2)-acetyl-L-ornithine (linear): step 1/1. In terms of biological role, catalyzes the hydrolysis of the amide bond of N(2)-acetylated L-amino acids. Cleaves the acetyl group from N-acetyl-L-ornithine to form L-ornithine, an intermediate in L-arginine biosynthesis pathway, and a branchpoint in the synthesis of polyamines. This Photorhabdus laumondii subsp. laumondii (strain DSM 15139 / CIP 105565 / TT01) (Photorhabdus luminescens subsp. laumondii) protein is Acetylornithine deacetylase.